The following is a 530-amino-acid chain: Autoinducer-2 kinase (530 aa).

It belongs to the FGGY kinase family.

The protein resides in the cytoplasm. The enzyme catalyses (S)-4,5-dihydroxypentane-2,3-dione + ATP = (2S)-2-hydroxy-3,4-dioxopentyl phosphate + ADP + H(+). Its function is as follows. Catalyzes the phosphorylation of autoinducer-2 (AI-2) to phospho-AI-2, which subsequently inactivates the transcriptional regulator LsrR and leads to the transcription of the lsr operon. Phosphorylates the ring-open form of (S)-4,5-dihydroxypentane-2,3-dione (DPD), which is the precursor to all AI-2 signaling molecules, at the C5 position. The polypeptide is Autoinducer-2 kinase (Yersinia pseudotuberculosis serotype O:3 (strain YPIII)).